The chain runs to 163 residues: Phosphopantetheine adenylyltransferase (163 aa).

Residue Thr-10 coordinates substrate. ATP is bound by residues 10–11 and His-18; that span reads TF. Substrate contacts are provided by Lys-42, Leu-74, and Arg-88. Residues 89–91, Glu-99, and 124–130 each bind ATP; these read GLR and NSFISST.

Belongs to the bacterial CoaD family. Homohexamer. Requires Mg(2+) as cofactor.

It localises to the cytoplasm. It catalyses the reaction (R)-4'-phosphopantetheine + ATP + H(+) = 3'-dephospho-CoA + diphosphate. It functions in the pathway cofactor biosynthesis; coenzyme A biosynthesis; CoA from (R)-pantothenate: step 4/5. Reversibly transfers an adenylyl group from ATP to 4'-phosphopantetheine, yielding dephospho-CoA (dPCoA) and pyrophosphate. The chain is Phosphopantetheine adenylyltransferase from Shewanella sp. (strain W3-18-1).